A 278-amino-acid polypeptide reads, in one-letter code: Rhomboid protease GlpG (278 aa).

The next 6 helical transmembrane spans lie at 94-114 (AGPL…LMLI), 143-163 (AFLH…WYLG), 175-195 (LLVL…LFSG), 196-216 (ANFG…WLTG), 224-241 (ISLP…LIAG), and 245-267 (ILGL…LMAF). Ser202 acts as the Nucleophile in catalysis. Residue His255 is part of the active site.

It belongs to the peptidase S54 family.

The protein localises to the cell inner membrane. It carries out the reaction Cleaves type-1 transmembrane domains using a catalytic dyad composed of serine and histidine that are contributed by different transmembrane domains.. Functionally, rhomboid-type serine protease that catalyzes intramembrane proteolysis. The protein is Rhomboid protease GlpG of Yersinia pseudotuberculosis serotype I (strain IP32953).